We begin with the raw amino-acid sequence, 341 residues long: Uroporphyrinogen decarboxylase (341 aa).

Substrate is bound by residues 26–30 (RQAGR), aspartate 75, tyrosine 150, serine 205, and histidine 318.

This sequence belongs to the uroporphyrinogen decarboxylase family. Homodimer.

It localises to the cytoplasm. It catalyses the reaction uroporphyrinogen III + 4 H(+) = coproporphyrinogen III + 4 CO2. The protein operates within porphyrin-containing compound metabolism; protoporphyrin-IX biosynthesis; coproporphyrinogen-III from 5-aminolevulinate: step 4/4. Functionally, catalyzes the decarboxylation of four acetate groups of uroporphyrinogen-III to yield coproporphyrinogen-III. This chain is Uroporphyrinogen decarboxylase, found in Thermus thermophilus (strain ATCC BAA-163 / DSM 7039 / HB27).